A 648-amino-acid polypeptide reads, in one-letter code: DNA ligase (648 aa).

NAD(+) is bound by residues 63–67 (DILYD) and 105–106 (ST). The N6-AMP-lysine intermediate role is filled by K143. NAD(+)-binding residues include R159, E190, and K302. Residues C390, C393, C406, and C412 each coordinate Zn(2+). Residues 570–648 (SLASPLTGKI…SEQEYLDLIS (79 aa)) enclose the BRCT domain.

The protein belongs to the NAD-dependent DNA ligase family. LigA subfamily. Mg(2+) is required as a cofactor. Requires Mn(2+) as cofactor.

It catalyses the reaction NAD(+) + (deoxyribonucleotide)n-3'-hydroxyl + 5'-phospho-(deoxyribonucleotide)m = (deoxyribonucleotide)n+m + AMP + beta-nicotinamide D-nucleotide.. DNA ligase that catalyzes the formation of phosphodiester linkages between 5'-phosphoryl and 3'-hydroxyl groups in double-stranded DNA using NAD as a coenzyme and as the energy source for the reaction. It is essential for DNA replication and repair of damaged DNA. The protein is DNA ligase of Shewanella baltica (strain OS155 / ATCC BAA-1091).